A 206-amino-acid polypeptide reads, in one-letter code: Ras-related protein Rab-7a (206 aa).

15-22 lines the GTP pocket; it reads GDSGVGKT. Phosphoserine occurs at positions 17 and 23. Phosphothreonine occurs at positions 34, 40, and 64. Residues 34 to 40 and 63 to 67 contribute to the GTP site; these read TQQYRAT and DTAGQ. The short motif at 37–45 is the Effector region element; sequence YRATVGADF. Serine 72 bears the Phosphoserine mark. Phosphotyrosine is present on residues tyrosine 78 and tyrosine 88. GTP is bound by residues 125–128 and 157–158; these read NKLD and AK. S-geranylgeranyl cysteine attachment occurs at residues cysteine 205 and cysteine 206.

This sequence belongs to the small GTPase superfamily. Rab family.

It localises to the cytoplasmic vesicle. It is found in the phagosome membrane. The protein resides in the late endosome membrane. The protein localises to the lysosome membrane. Its subcellular location is the autophagosome membrane. It localises to the lipid droplet. It catalyses the reaction GTP + H2O = GDP + phosphate + H(+). Functionally, small GTPase which cycles between active GTP-bound and inactive GDP-bound states. In its active state, binds to a variety of effector proteins playing a key role in the regulation of endo-lysosomal trafficking. Governs early-to-late endosomal maturation, microtubule minus-end as well as plus-end directed endosomal migration and positioning, and endosome-lysosome transport through different protein-protein interaction cascades. Involved in lipophagy, a cytosolic lipase-independent autophagic pathway. Plays a role in phagocyte formation and acidification. This chain is Ras-related protein Rab-7a, found in Paramecium octaurelia.